We begin with the raw amino-acid sequence, 107 residues long: Ferredoxin 1 (107 aa).

4Fe-4S ferredoxin-type domains are found at residues Thr2–Pro30 and Asn31–Glu60. [3Fe-4S] cluster contacts are provided by Cys9 and Cys17. Residues Cys21, Cys40, Cys43, and Cys46 each contribute to the [4Fe-4S] cluster site. Cys50 is a [3Fe-4S] cluster binding site.

[4Fe-4S] cluster serves as cofactor. The cofactor is [3Fe-4S] cluster.

Functionally, ferredoxins are iron-sulfur proteins that transfer electrons in a wide variety of metabolic reactions. The polypeptide is Ferredoxin 1 (fdxA) (Pseudomonas aeruginosa (strain ATCC 15692 / DSM 22644 / CIP 104116 / JCM 14847 / LMG 12228 / 1C / PRS 101 / PAO1)).